We begin with the raw amino-acid sequence, 189 residues long: Peptidyl-tRNA hydrolase (189 aa).

The active-site Proton acceptor is the His-19. Tyr-64, Asn-66, and Asn-112 together coordinate tRNA.

The protein belongs to the PTH family. As to quaternary structure, monomer.

Its subcellular location is the cytoplasm. It carries out the reaction an N-acyl-L-alpha-aminoacyl-tRNA + H2O = an N-acyl-L-amino acid + a tRNA + H(+). Functionally, hydrolyzes ribosome-free peptidyl-tRNAs (with 1 or more amino acids incorporated), which drop off the ribosome during protein synthesis, or as a result of ribosome stalling. Catalyzes the release of premature peptidyl moieties from peptidyl-tRNA molecules trapped in stalled 50S ribosomal subunits, and thus maintains levels of free tRNAs and 50S ribosomes. The sequence is that of Peptidyl-tRNA hydrolase from Gluconobacter oxydans (strain 621H) (Gluconobacter suboxydans).